The following is a 568-amino-acid chain: Phosphoprotein (568 aa).

The segment at 1-24 (MDQDAFFFERDPEAEGEAPRKQES) is disordered. Basic and acidic residues predominate over residues 7–24 (FFERDPEAEGEAPRKQES). The segment at 33–41 (DVVLSYKPT) is N0 binding. Residues 45-324 (EDRSWLHGII…ANEEETSNTS (280 aa)) form a disordered region. Basic and acidic residues-rich tracts occupy residues 56 to 105 (NPKE…HARI), 132 to 144 (RNTR…PNER), and 151 to 167 (LTDE…KREE). Residues 190–208 (RTNNNGRSMETSSTHSTRI) are compositionally biased toward polar residues. Positions 239–253 (TRSERTQNSELHKST) are enriched in basic and acidic residues. The segment covering 294–305 (YTMNNANNNTKS) has biased composition (polar residues). Positions 344–411 (FELSRSASHV…SSRDLHKRFS (68 aa)) are multimerization. A coiled-coil region spans residues 387–416 (EENRTLLKQIQEEINSSRDLHKRFSEYQKE). The tract at residues 412–445 (EYQKEQNSLMMANLSTLHIITDRGGKTGDPSDTT) is l protein binding. The segment at 434–455 (RGGKTGDPSDTTRSPSVFTKGK) is disordered. Residues 441-450 (PSDTTRSPSV) are compositionally biased toward polar residues. The interaction with the nucleocapsid (N-RNA) stretch occupies residues 479–568 (DLIREDELRD…FEEDIDSLTN (90 aa)).

The protein belongs to the respirovirus P protein family. As to quaternary structure, homotetramer. Interacts (via multimerization domain) with polymerase L; this interaction forms the polymerase complex. Interacts (via N-terminus) with N0; this interaction allows P to chaperon N0 before encapsidation and form the N-P complex. Interacts (via C-terminus) with N-RNA template; this interaction positions the polymerase on the template.

Essential cofactor of the RNA polymerase L that plays a central role in the transcription and replication by forming the polymerase complex with RNA polymerase L and recruiting L to the genomic N-RNA template for RNA synthesis. Also plays a central role in the encapsidation of nascent RNA chains by forming the encapsidation complex with the nucleocapsid protein N (N-P complex). Acts as a chaperone for newly synthesized free N protein, so-called N0, allowing encapsidation of nascent RNA chains during replication. The nucleoprotein protein N prevents excessive phosphorylation of P, which leads to down-regulation of viral transcription/ replication. Participates, together with N, in the formation of viral factories (viroplasms), which are large inclusions in the host cytoplasm where replication takes place. Recruits host PI4KB and remodel the host endoplasmic reticulum membrane to form viral replication factories. This is Phosphoprotein (P/C) from Human parainfluenza 1 virus (strain C35) (HPIV-1).